The primary structure comprises 490 residues: Aspartyl/glutamyl-tRNA(Asn/Gln) amidotransferase subunit B (490 aa).

It belongs to the GatB/GatE family. GatB subfamily. As to quaternary structure, heterotrimer of A, B and C subunits.

It carries out the reaction L-glutamyl-tRNA(Gln) + L-glutamine + ATP + H2O = L-glutaminyl-tRNA(Gln) + L-glutamate + ADP + phosphate + H(+). The catalysed reaction is L-aspartyl-tRNA(Asn) + L-glutamine + ATP + H2O = L-asparaginyl-tRNA(Asn) + L-glutamate + ADP + phosphate + 2 H(+). Allows the formation of correctly charged Asn-tRNA(Asn) or Gln-tRNA(Gln) through the transamidation of misacylated Asp-tRNA(Asn) or Glu-tRNA(Gln) in organisms which lack either or both of asparaginyl-tRNA or glutaminyl-tRNA synthetases. The reaction takes place in the presence of glutamine and ATP through an activated phospho-Asp-tRNA(Asn) or phospho-Glu-tRNA(Gln). The protein is Aspartyl/glutamyl-tRNA(Asn/Gln) amidotransferase subunit B of Synechococcus sp. (strain JA-3-3Ab) (Cyanobacteria bacterium Yellowstone A-Prime).